The following is a 122-amino-acid chain: Proteasome assembly chaperone 3 (122 aa).

M1 bears the N-acetylmethionine mark.

It belongs to the PSMG3 family. Homodimer. Interacts directly with alpha and beta subunits of the 20S proteasome but dissociates before the formation of half-proteasomes, probably upon recruitment of POMP. Interacts with PSMG4.

In terms of biological role, chaperone protein which promotes assembly of the 20S proteasome. May cooperate with PSMG1-PSMG2 heterodimers to orchestrate the correct assembly of proteasomes. The sequence is that of Proteasome assembly chaperone 3 (Psmg3) from Mus musculus (Mouse).